The primary structure comprises 307 residues: Ribonuclease Z (307 aa).

H61, H63, D65, H66, H138, D208, and H264 together coordinate Zn(2+). D65 (proton acceptor) is an active-site residue.

It belongs to the RNase Z family. As to quaternary structure, homodimer. Zn(2+) is required as a cofactor.

The catalysed reaction is Endonucleolytic cleavage of RNA, removing extra 3' nucleotides from tRNA precursor, generating 3' termini of tRNAs. A 3'-hydroxy group is left at the tRNA terminus and a 5'-phosphoryl group is left at the trailer molecule.. Zinc phosphodiesterase, which displays some tRNA 3'-processing endonuclease activity. Probably involved in tRNA maturation, by removing a 3'-trailer from precursor tRNA. This is Ribonuclease Z from Pyrococcus abyssi (strain GE5 / Orsay).